Here is a 705-residue protein sequence, read N- to C-terminus: Dolichyl-diphosphooligosaccharide--protein glycosyltransferase subunit STT3A (705 aa).

Over 1 to 17 the chain is Cytoplasmic; the sequence is MTKLGFLRLSYEKQDTL. The helical transmembrane segment at 18–38 threads the bilayer; sequence LKLLILSMAAVLSFSTRLFAV. Topologically, residues 39 to 119 are lumenal; sequence LRFESVIHEF…IDIRNVCVFL (81 aa). A DXD motif 1 motif is present at residues 47–49; sequence EFD. Asp49 provides a ligand contact to Mn(2+). The helical transmembrane segment at 120-138 threads the bilayer; the sequence is APLFSSFTTIVTYHLTKEL. The Cytoplasmic portion of the chain corresponds to 139-140; sequence KD. A helical membrane pass occupies residues 141–158; it reads AGAGLLAAAMIAVVPGYI. Over 159–169 the chain is Lumenal; it reads SRSVAGSYDNE. Asp167 and Glu169 together coordinate Mn(2+). A DXD motif 2 motif is present at residues 167-169; that stretch reads DNE. The chain crosses the membrane as a helical span at residues 170 to 189; it reads GIAIFCMLLTYYMWIKAVKT. The Cytoplasmic segment spans residues 190–191; that stretch reads GS. The helical transmembrane segment at 192–206 threads the bilayer; that stretch reads IYWAAKCALAYFYMV. Residues 207–211 lie on the Lumenal side of the membrane; the sequence is SSWGG. Residues 212–228 traverse the membrane as a helical segment; that stretch reads YVFLINLIPLHVLVLML. The Cytoplasmic segment spans residues 229–233; sequence TGRFS. The helical transmembrane segment at 234-259 threads the bilayer; that stretch reads HRIYVAYCTVYCLGTILSMQISFVGF. The Lumenal portion of the chain corresponds to 260–267; it reads QPVLSSEH. The helical transmembrane segment at 268 to 287 threads the bilayer; the sequence is MAAFGVFGLCQIHAFVDYLR. The Cytoplasmic portion of the chain corresponds to 288–300; the sequence is SKLNPQQFEVLFR. Residues 301–321 traverse the membrane as a helical segment; the sequence is SVISLVGFVLLTIGALLMLTG. Residues 322–356 are Lumenal-facing; it reads KISPWTGRFYSLLDPSYAKNNIPIIASVSEHQPTT. An SVSE motif motif is present at residues 348-351; that stretch reads SVSE. Residues 357-379 form a helical membrane-spanning segment; that stretch reads WSSYYFDLQLLVFMFPVGLYYCF. Residues 380-385 lie on the Cytoplasmic side of the membrane; sequence SNLSDA. The chain crosses the membrane as a helical span at residues 386–402; the sequence is RIFIIMYGVTSMYFSAV. At 403–406 the chain is on the lumenal side; sequence MVRL. Dolichyl diphosphooligosaccharide is bound at residue Arg405. A helical membrane pass occupies residues 407–428; the sequence is MLVLAPVMCILSGIGVSQVLST. The Cytoplasmic portion of the chain corresponds to 429-453; that stretch reads YMKNLDISRQDKKSKKQQDSTYPIK. A helical transmembrane segment spans residues 454–473; sequence NEVASGMILVMAFFLITYTF. Residues 474 to 705 are Lumenal-facing; it reads HSTWVTSEAY…DLDNRGLSRT (232 aa). The interacts with target acceptor peptide in protein substrate stretch occupies residues 525–527; it reads WWD. The WWDYG motif signature appears at 525 to 529; sequence WWDYG. Tyr530 provides a ligand contact to dolichyl diphosphooligosaccharide. Asn537 and Asn544 each carry an N-linked (GlcNAc...) asparagine glycan. An N-linked (GlcNAc...) (high mannose) asparagine glycan is attached at Asn548. The DK motif signature appears at 592-599; the sequence is DINKFLWM.

Belongs to the STT3 family. As to quaternary structure, component of the oligosaccharyltransferase (OST) complex. There are 2 OST complexes, OST-A and OST-B, which contain STT3A or STT3B as catalytic subunit, respectively. OST-A and OST-B contain common core subunits RPN1, RPN2, OST48, OST4, DAD1 and TMEM258, and OST-A contains DC2/OSTC and KRTCAP2/KCP2 specific accessory subunits. OST-A complex assembly occurs through the formation of 3 subcomplexes. Subcomplex 1 contains RPN1 and TMEM258, subcomplex 2 contains the OST-A-specific subunits STT3A, DC2/OSTC, and KCP2 as well as the core subunit OST4, and subcomplex 3 contains RPN2, DAD1, and OST48. The OST-A complex can form stable complexes with the Sec61 complex or with both the Sec61 and TRAP complexes. Mg(2+) serves as cofactor. Mn(2+) is required as a cofactor.

The protein resides in the endoplasmic reticulum membrane. The enzyme catalyses a di-trans,poly-cis-dolichyl diphosphooligosaccharide + L-asparaginyl-[protein] = N(4)-(oligosaccharide-(1-&gt;4)-N-acetyl-beta-D-glucosaminyl-(1-&gt;4)-N-acetyl-beta-D-glucosaminyl)-L-asparaginyl-[protein] + a di-trans,poly-cis-dolichyl diphosphate + H(+). The protein operates within protein modification; protein glycosylation. Its function is as follows. Catalytic subunit of the oligosaccharyl transferase (OST) complex that catalyzes the initial transfer of a defined glycan (Glc(3)Man(9)GlcNAc(2) in eukaryotes) from the lipid carrier dolichol-pyrophosphate to an asparagine residue within an Asn-X-Ser/Thr consensus motif in nascent polypeptide chains, the first step in protein N-glycosylation. N-glycosylation occurs cotranslationally and the complex associates with the Sec61 complex at the channel-forming translocon complex that mediates protein translocation across the endoplasmic reticulum (ER). All subunits are required for a maximal enzyme activity. This subunit contains the active site and the acceptor peptide and donor lipid-linked oligosaccharide (LLO) binding pockets. STT3A is present in the majority of OST complexes and mediates cotranslational N-glycosylation of most sites on target proteins, while STT3B-containing complexes are required for efficient post-translational glycosylation and mediate glycosylation of sites that have been skipped by STT3A. STT3A-containing OST-A complex is also required to prevent hyperglycosylation of some target proteins by preventing glycosylation of facultative sites before folding of target proteins is completed. The chain is Dolichyl-diphosphooligosaccharide--protein glycosyltransferase subunit STT3A from Bos taurus (Bovine).